We begin with the raw amino-acid sequence, 668 residues long: Threonine--tRNA ligase (668 aa).

Residues 1–64 (MSEAIFLTFP…ADGKIEIITR (64 aa)) form the TGS domain. The segment at 245–553 (DHRKLGREMD…LIENFAGHLP (309 aa)) is catalytic. The Zn(2+) site is built by Cys-347, His-398, and His-530.

It belongs to the class-II aminoacyl-tRNA synthetase family. Homodimer. It depends on Zn(2+) as a cofactor.

It is found in the cytoplasm. It catalyses the reaction tRNA(Thr) + L-threonine + ATP = L-threonyl-tRNA(Thr) + AMP + diphosphate + H(+). Catalyzes the attachment of threonine to tRNA(Thr) in a two-step reaction: L-threonine is first activated by ATP to form Thr-AMP and then transferred to the acceptor end of tRNA(Thr). Also edits incorrectly charged L-seryl-tRNA(Thr). The protein is Threonine--tRNA ligase of Rhizobium leguminosarum bv. trifolii (strain WSM2304).